We begin with the raw amino-acid sequence, 665 residues long: PR5-like receptor kinase (665 aa).

A signal peptide spans 1-24 (MVEGFSLSLMFLLVSHFFVSGVMS). At 25 to 276 (RNFTIENKCD…TKQKSSWKLK (252 aa)) the chain is on the extracellular side. Residues asparagine 26 and asparagine 88 are each glycosylated (N-linked (GlcNAc...) asparagine). Cystine bridges form between cysteine 33–cysteine 249, cysteine 81–cysteine 91, cysteine 96–cysteine 103, cysteine 153–cysteine 238, cysteine 158–cysteine 221, cysteine 166–cysteine 184, cysteine 188–cysteine 197, and cysteine 198–cysteine 208. Asparagine 163 carries N-linked (GlcNAc...) asparagine glycosylation. Residue asparagine 233 is glycosylated (N-linked (GlcNAc...) asparagine). The helical transmembrane segment at 277 to 297 (LIVGVSAALTLMILIVVVIIV) threads the bilayer. At 298–665 (RTKNMRNSEW…DVLQHGSRSS (368 aa)) the chain is on the cytoplasmic side. Positions 331-620 (NSFAHVLGKG…ALQVPPNPLL (290 aa)) constitute a Protein kinase domain. ATP contacts are provided by residues 337–345 (LGKGGFGTV) and lysine 360. The active-site Proton acceptor is the aspartate 455.

In the N-terminal section; belongs to the thaumatin family. It in the C-terminal section; belongs to the protein kinase superfamily. Ser/Thr protein kinase family. Autophosphorylated in vitro. In terms of tissue distribution, expressed in roots. Expressed at low levels in stems.

Its subcellular location is the membrane. It carries out the reaction L-seryl-[protein] + ATP = O-phospho-L-seryl-[protein] + ADP + H(+). The enzyme catalyses L-threonyl-[protein] + ATP = O-phospho-L-threonyl-[protein] + ADP + H(+). Possesses kinase activity in vitro. In Arabidopsis thaliana (Mouse-ear cress), this protein is PR5-like receptor kinase.